The primary structure comprises 671 residues: Acetyl-coenzyme A synthetase 1 (671 aa).

CoA-binding positions include 210 to 213 and threonine 329; that span reads RGGK. ATP-binding positions include 405–407, 429–434, aspartate 520, and arginine 535; these read GEP and DTYWQT. Serine 543 lines the CoA pocket. Arginine 546 contributes to the ATP binding site. CoA is bound at residue arginine 605.

It belongs to the ATP-dependent AMP-binding enzyme family.

It catalyses the reaction acetate + ATP + CoA = acetyl-CoA + AMP + diphosphate. This is Acetyl-coenzyme A synthetase 1 (ACS1) from Debaryomyces hansenii (strain ATCC 36239 / CBS 767 / BCRC 21394 / JCM 1990 / NBRC 0083 / IGC 2968) (Yeast).